A 288-amino-acid chain; its full sequence is Probable pectinesterase 56 (288 aa).

An N-terminal signal peptide occupies residues methionine 1–alanine 27. 2 N-linked (GlcNAc...) asparagine glycosylation sites follow: asparagine 55 and asparagine 95. The substrate site is built by threonine 120 and glutamine 150. Catalysis depends on aspartate 173, which acts as the Proton donor. Aspartate 194 (nucleophile) is an active-site residue. N-linked (GlcNAc...) asparagine glycosylation occurs at asparagine 242. Positions 262 and 264 each coordinate substrate.

It belongs to the pectinesterase family.

Its subcellular location is the secreted. The protein localises to the cell wall. It catalyses the reaction [(1-&gt;4)-alpha-D-galacturonosyl methyl ester](n) + n H2O = [(1-&gt;4)-alpha-D-galacturonosyl](n) + n methanol + n H(+). The protein operates within glycan metabolism; pectin degradation; 2-dehydro-3-deoxy-D-gluconate from pectin: step 1/5. In terms of biological role, acts in the modification of cell walls via demethylesterification of cell wall pectin. The polypeptide is Probable pectinesterase 56 (PME56) (Arabidopsis thaliana (Mouse-ear cress)).